The primary structure comprises 359 residues: Type-1 angiotensin II receptor A (359 aa).

At 1 to 25 the chain is on the extracellular side; sequence MALNSSTEDGIKRIQDDCPRAGRHS. The N-linked (GlcNAc...) asparagine glycan is linked to N4. Positions 15 and 17 each coordinate angiotensin II. 2 disulfides stabilise this stretch: C18–C274 and C101–C180. Residues 26–55 form a helical membrane-spanning segment; the sequence is YIFVMIPTLYSIIFVVGIFGNSLVVIVIYF. At 56–61 the chain is on the cytoplasmic side; the sequence is YMKLKT. The helical transmembrane segment at 62 to 89 threads the bilayer; it reads VASVFLLNLALADLCFLLTLPLWAVYTA. Residues 90-98 are Extracellular-facing; that stretch reads MEYRWPFGN. Residues 99–125 form a helical membrane-spanning segment; the sequence is HLCKIASASVSFNLYASVFLLTCLSID. At 126-141 the chain is on the cytoplasmic side; the sequence is RYLAIVHPMKSRLRRT. Residues 142-165 form a helical membrane-spanning segment; that stretch reads MLVAKVTCIIIWLMAGLASLPAVI. Residues 166 to 190 are Extracellular-facing; the sequence is HRNVYFIENTNITVCAFHYESRNST. Angiotensin II is bound at residue R167. N176 carries N-linked (GlcNAc...) asparagine glycosylation. Angiotensin II-binding residues include F182, H183, and Y184. N-linked (GlcNAc...) asparagine glycosylation is present at N188. A helical membrane pass occupies residues 191–216; sequence LPIGLGLTKNILGFLFPFLIILTSYT. Residue K199 coordinates angiotensin II. The Cytoplasmic portion of the chain corresponds to 217–239; that stretch reads LIWKALKKAYEIQKNKPRNDDIF. Residues 240–268 form a helical membrane-spanning segment; the sequence is RIIMAIVLFFFFSWVPHQIFTFLDVLIQL. Topologically, residues 269-278 are extracellular; sequence GVIHDCKIAD. A helical transmembrane segment spans residues 279 to 304; that stretch reads IVDTAMPITICIAYFNNCLNPLFYGF. Over 305 to 359 the chain is Cytoplasmic; that stretch reads LGKKFKKYFLQLLKYIPPKAKSHSSLSTKMSTLSYRPSDNMSSAAKKPASCSEVE. The segment covering 335-347 has biased composition (polar residues); sequence STLSYRPSDNMSS. Residues 335–359 form a disordered region; the sequence is STLSYRPSDNMSSAAKKPASCSEVE. Residue C355 is the site of S-palmitoyl cysteine attachment.

This sequence belongs to the G-protein coupled receptor 1 family. As to quaternary structure, interacts with MAS1. Interacts with ARRB1. Interacts with FLNA (via filamin repeat 21); increases PKA-mediated phosphorylation of FLNA. Post-translationally, C-terminal Ser or Thr residues may be phosphorylated.

It localises to the cell membrane. Functionally, receptor for angiotensin II, a vasoconstricting peptide, which acts as a key regulator of blood pressure and sodium retention by the kidney. The activated receptor in turn couples to G-alpha proteins G(q) (GNAQ, GNA11, GNA14 or GNA15) and thus activates phospholipase C and increases the cytosolic Ca(2+) concentrations, which in turn triggers cellular responses such as stimulation of protein kinase C. The sequence is that of Type-1 angiotensin II receptor A (Agtr1a) from Mus musculus (Mouse).